The following is a 352-amino-acid chain: Ketoisovalerate oxidoreductase subunit VorB (352 aa).

Heterotrimer of the VorA, VorB and VorC subunits.

The enzyme catalyses 3-methyl-2-oxobutanoate + 2 oxidized [2Fe-2S]-[ferredoxin] + CoA = 2-methylpropanoyl-CoA + 2 reduced [2Fe-2S]-[ferredoxin] + CO2 + H(+). This Methanothermobacter marburgensis (strain ATCC BAA-927 / DSM 2133 / JCM 14651 / NBRC 100331 / OCM 82 / Marburg) (Methanobacterium thermoautotrophicum) protein is Ketoisovalerate oxidoreductase subunit VorB (vorB).